Consider the following 136-residue polypeptide: MLQPKRTKFRKRHKGRNRGLANGTDVHFGTFGIKAVDRGQMTARQIEAARRTITRAIKRQGQVWIRVYPDTPVTEKPLEVRMGNGKGNVEYWVSKIQPGKVLYEIDGVPEEAAREAFALATSKLPLRTTFVTKTVM.

Basic residues predominate over residues 1 to 17 (MLQPKRTKFRKRHKGRN). The tract at residues 1–21 (MLQPKRTKFRKRHKGRNRGLA) is disordered.

This sequence belongs to the universal ribosomal protein uL16 family. As to quaternary structure, part of the 50S ribosomal subunit.

In terms of biological role, binds 23S rRNA and is also seen to make contacts with the A and possibly P site tRNAs. This Buchnera aphidicola subsp. Acyrthosiphon kondoi (Acyrthosiphon kondoi symbiotic bacterium) protein is Large ribosomal subunit protein uL16.